The chain runs to 142 residues: Large ribosomal subunit protein uL11 (142 aa).

The protein belongs to the universal ribosomal protein uL11 family. As to quaternary structure, part of the ribosomal stalk of the 50S ribosomal subunit. Interacts with L10 and the large rRNA to form the base of the stalk. L10 forms an elongated spine to which L12 dimers bind in a sequential fashion forming a multimeric L10(L12)X complex. In terms of processing, one or more lysine residues are methylated.

Its function is as follows. Forms part of the ribosomal stalk which helps the ribosome interact with GTP-bound translation factors. This chain is Large ribosomal subunit protein uL11, found in Mycobacterium ulcerans (strain Agy99).